A 236-amino-acid polypeptide reads, in one-letter code: Probable fimbrial chaperone EcpE (236 aa).

The first 27 residues, 1 to 27 (MFRRRGVTLTKALLTVVCMLAAPLTQA), serve as a signal peptide directing secretion.

It belongs to the EcpB/EcpE family.

Its function is as follows. Part of the ecpRABCDE operon, which encodes the E.coli common pilus (ECP). ECP is found in both commensal and pathogenic strains and plays a dual role in early-stage biofilm development and host cell recognition. This is Probable fimbrial chaperone EcpE (ecpE) from Escherichia coli O18:K1:H7 (strain IHE3034 / ExPEC).